The sequence spans 70 residues: Putative RNA-binding protein YbcJ (70 aa).

Residues 12–68 (VELCDLLKLEGWSESGAQAKIAIAEGQVKVDGAVETRKRCKIVAGQTVSFAGHSVQV) form the S4 RNA-binding domain.

In pull-down experiments interacts with CedA.

Its structure and the presence of conserved basic residues indicates that it probably binds RNA. The protein is Putative RNA-binding protein YbcJ (ybcJ) of Escherichia coli (strain K12).